Consider the following 814-residue polypeptide: Acyl-coenzyme A dehydrogenase (814 aa).

Residue Glu-497 is the Proton acceptor of the active site.

This sequence belongs to the acyl-CoA dehydrogenase family. FAD is required as a cofactor.

It catalyses the reaction a medium-chain 2,3-saturated fatty acyl-CoA + oxidized [electron-transfer flavoprotein] + H(+) = a medium-chain (2E)-enoyl-CoA + reduced [electron-transfer flavoprotein]. It carries out the reaction a long-chain 2,3-saturated fatty acyl-CoA + oxidized [electron-transfer flavoprotein] + H(+) = a long-chain (2E)-enoyl-CoA + reduced [electron-transfer flavoprotein]. It participates in lipid metabolism; fatty acid beta-oxidation. Its function is as follows. Catalyzes the dehydrogenation of acyl-coenzymes A (acyl-CoAs) to 2-enoyl-CoAs, the first step of the beta-oxidation cycle of fatty acid degradation. Is required for E.coli to utilize dodecanoate or oleate as the sole carbon and energy source for growth. The protein is Acyl-coenzyme A dehydrogenase of Escherichia coli (strain K12).